Reading from the N-terminus, the 687-residue chain is Glycine--tRNA ligase beta subunit (687 aa).

This sequence belongs to the class-II aminoacyl-tRNA synthetase family. In terms of assembly, tetramer of two alpha and two beta subunits.

It localises to the cytoplasm. It catalyses the reaction tRNA(Gly) + glycine + ATP = glycyl-tRNA(Gly) + AMP + diphosphate. This is Glycine--tRNA ligase beta subunit from Neisseria meningitidis serogroup B (strain ATCC BAA-335 / MC58).